The primary structure comprises 96 residues: Large ribosomal subunit protein eL43 (96 aa).

The C4-type zinc-finger motif lies at 39-60; it reads CTFCGKTATKRTCVGIWKCKKC.

It belongs to the eukaryotic ribosomal protein eL43 family. Component of the large ribosomal subunit. Mature ribosomes consist of a small (40S) and a large (60S) subunit. The 40S subunit contains about 32 different proteins and 1 molecule of RNA (18S). The 60S subunit contains about 42 different proteins and 3 molecules of RNA (28S, 5.8S and 5S).

The protein localises to the cytoplasm. Component of the ribosome, a large ribonucleoprotein complex responsible for the synthesis of proteins in the cell. The small ribosomal subunit (SSU) binds messenger RNAs (mRNAs) and translates the encoded message by selecting cognate aminoacyl-transfer RNA (tRNA) molecules. The large subunit (LSU) contains the ribosomal catalytic site termed the peptidyl transferase center (PTC), which catalyzes the formation of peptide bonds, thereby polymerizing the amino acids delivered by tRNAs into a polypeptide chain. The nascent polypeptides leave the ribosome through a tunnel in the LSU and interact with protein factors that function in enzymatic processing, targeting, and the membrane insertion of nascent chains at the exit of the ribosomal tunnel. This is Large ribosomal subunit protein eL43 from Plasmodium falciparum (isolate 3D7).